Here is an 89-residue protein sequence, read N- to C-terminus: DNA/RNA-binding protein Alba (89 aa).

An N6-acetyllysine modification is found at Lys11.

Belongs to the histone-like Alba family. Post-translationally, acetylated. Acetylation at Lys-11 decreases DNA-binding affinity.

The protein localises to the cytoplasm. It is found in the chromosome. Binds double-stranded DNA tightly but without sequence specificity. Involved in DNA compaction. The sequence is that of DNA/RNA-binding protein Alba from Thermoplasma acidophilum (strain ATCC 25905 / DSM 1728 / JCM 9062 / NBRC 15155 / AMRC-C165).